We begin with the raw amino-acid sequence, 49 residues long: Large ribosomal subunit protein eL40 (49 aa).

This sequence belongs to the eukaryotic ribosomal protein eL40 family.

The polypeptide is Large ribosomal subunit protein eL40 (Methanococcoides burtonii (strain DSM 6242 / NBRC 107633 / OCM 468 / ACE-M)).